The following is a 1323-amino-acid chain: DNA-directed RNA polymerase subunit beta' (1323 aa).

C60, C62, C75, and C78 together coordinate Zn(2+). 3 residues coordinate Mg(2+): D535, D537, and D539. Zn(2+) contacts are provided by C894, C977, C984, and C987.

Belongs to the RNA polymerase beta' chain family. As to quaternary structure, the RNAP catalytic core consists of 2 alpha, 1 beta, 1 beta' and 1 omega subunit. When a sigma factor is associated with the core the holoenzyme is formed, which can initiate transcription. It depends on Mg(2+) as a cofactor. Requires Zn(2+) as cofactor.

The catalysed reaction is RNA(n) + a ribonucleoside 5'-triphosphate = RNA(n+1) + diphosphate. In terms of biological role, DNA-dependent RNA polymerase catalyzes the transcription of DNA into RNA using the four ribonucleoside triphosphates as substrates. The sequence is that of DNA-directed RNA polymerase subunit beta' from Corynebacterium urealyticum (strain ATCC 43042 / DSM 7109).